The following is a 477-amino-acid chain: Ribulose bisphosphate carboxylase large chain (477 aa).

The propeptide occupies 1-2; the sequence is MS. Residue Pro3 is modified to N-acetylproline. Lys14 carries the post-translational modification N6,N6,N6-trimethyllysine. Residues Asn123 and Thr173 each contribute to the substrate site. The active-site Proton acceptor is Lys175. Lys177 provides a ligand contact to substrate. 3 residues coordinate Mg(2+): Lys201, Asp203, and Glu204. An N6-carboxylysine modification is found at Lys201. The active-site Proton acceptor is His294. Substrate contacts are provided by Arg295, His327, and Ser379.

This sequence belongs to the RuBisCO large chain family. Type I subfamily. Heterohexadecamer of 8 large chains and 8 small chains; disulfide-linked. The disulfide link is formed within the large subunit homodimers. It depends on Mg(2+) as a cofactor. Post-translationally, the disulfide bond which can form in the large chain dimeric partners within the hexadecamer appears to be associated with oxidative stress and protein turnover.

It localises to the plastid. It is found in the chloroplast. The enzyme catalyses 2 (2R)-3-phosphoglycerate + 2 H(+) = D-ribulose 1,5-bisphosphate + CO2 + H2O. It catalyses the reaction D-ribulose 1,5-bisphosphate + O2 = 2-phosphoglycolate + (2R)-3-phosphoglycerate + 2 H(+). Functionally, ruBisCO catalyzes two reactions: the carboxylation of D-ribulose 1,5-bisphosphate, the primary event in carbon dioxide fixation, as well as the oxidative fragmentation of the pentose substrate in the photorespiration process. Both reactions occur simultaneously and in competition at the same active site. This chain is Ribulose bisphosphate carboxylase large chain, found in Persea americana (Avocado).